A 524-amino-acid chain; its full sequence is Xanthotoxin 5-hydroxylase CYP82C4 (524 aa).

A helical membrane pass occupies residues 1–21; the sequence is MDTSLFSLFVPILVFVFIALF. Cysteine 463 is a binding site for heme.

This sequence belongs to the cytochrome P450 family. The cofactor is heme. As to expression, expressed in both primary and lateral roots under iron-deficient conditions, except in apical root zones, and mostly in the root epidermal layer.

Its subcellular location is the membrane. It catalyses the reaction fraxetin + reduced [NADPH--hemoprotein reductase] + O2 = sideretin (reduced form) + oxidized [NADPH--hemoprotein reductase] + H2O + H(+). The catalysed reaction is xanthotoxin + reduced [NADPH--hemoprotein reductase] + O2 = 5-hydroxyxanthotoxin + oxidized [NADPH--hemoprotein reductase] + H2O + 2 H(+). It participates in phenylpropanoid metabolism. Can hydroxylate xanthotoxin (8-methoxypsoralen) to form 5-hydroxyxanthotoxin (5-hydroxy-8-methoxypsoralen) in vivo and in vitro. Involved in the early iron deficiency response, possibly through an IDE1-like mediated pathway. Involved in the pathway of sideretin biosynthesis from feruloyl CoA, a redox-active catecholic metabolite exuded by roots in response to iron deficiency in order to facilitate the uptake of iron; this pathway consists in the successive conversion from feruloyl CoA to scopoletin, from scopoletin to fraxetin and from fraxetin to sideretin. Catalyzes the biosynthesis of sideretin via fraxetin hydroxylation. The sequence is that of Xanthotoxin 5-hydroxylase CYP82C4 from Arabidopsis thaliana (Mouse-ear cress).